Consider the following 149-residue polypeptide: D-aminoacyl-tRNA deacylase (149 aa).

Positions 137 to 138 (GP) match the Gly-cisPro motif, important for rejection of L-amino acids motif.

The protein belongs to the DTD family. In terms of assembly, homodimer.

The protein resides in the cytoplasm. The enzyme catalyses glycyl-tRNA(Ala) + H2O = tRNA(Ala) + glycine + H(+). It carries out the reaction a D-aminoacyl-tRNA + H2O = a tRNA + a D-alpha-amino acid + H(+). Functionally, an aminoacyl-tRNA editing enzyme that deacylates mischarged D-aminoacyl-tRNAs. Also deacylates mischarged glycyl-tRNA(Ala), protecting cells against glycine mischarging by AlaRS. Acts via tRNA-based rather than protein-based catalysis; rejects L-amino acids rather than detecting D-amino acids in the active site. By recycling D-aminoacyl-tRNA to D-amino acids and free tRNA molecules, this enzyme counteracts the toxicity associated with the formation of D-aminoacyl-tRNA entities in vivo and helps enforce protein L-homochirality. This is D-aminoacyl-tRNA deacylase from Desulforudis audaxviator (strain MP104C).